Reading from the N-terminus, the 430-residue chain is Phosphomethylpyrimidine synthase (430 aa).

Substrate is bound by residues Asn-67, Met-96, Tyr-125, His-161, 183–185 (SRG), 224–227 (DALR), and Glu-263. His-267 serves as a coordination point for Zn(2+). Tyr-290 lines the substrate pocket. Zn(2+) is bound at residue His-331. Residues Cys-406, Cys-409, and Cys-413 each contribute to the [4Fe-4S] cluster site.

The protein belongs to the ThiC family. Homodimer. [4Fe-4S] cluster serves as cofactor.

The enzyme catalyses 5-amino-1-(5-phospho-beta-D-ribosyl)imidazole + S-adenosyl-L-methionine = 4-amino-2-methyl-5-(phosphooxymethyl)pyrimidine + CO + 5'-deoxyadenosine + formate + L-methionine + 3 H(+). It participates in cofactor biosynthesis; thiamine diphosphate biosynthesis. In terms of biological role, catalyzes the synthesis of the hydroxymethylpyrimidine phosphate (HMP-P) moiety of thiamine from aminoimidazole ribotide (AIR) in a radical S-adenosyl-L-methionine (SAM)-dependent reaction. The polypeptide is Phosphomethylpyrimidine synthase (Campylobacter jejuni subsp. jejuni serotype O:23/36 (strain 81-176)).